Here is a 545-residue protein sequence, read N- to C-terminus: MLEQRCRGPTAMGPAQPWLFSGPSQESSQPDRGLRYQGKSAQPRGQTPGKVHRCAHCRKRFPGWVALWLHARRCQARLPLPCHECNQRFRHAPFLALHLQVHASAVPDLGFICHLCGHSFRGWVALVLHLRAHSASKRPITCPECDRRFWRQKQLRAHLRRCQPPVPEARPFICGNCGRSFAQWDQLVVHKRVHVAEALEEAAAKALGPRPRGRPAAPRPGGDAVDRPFQCACCGKRFRHKPNLIAHRRVHTGERPHQCPECGKRFTNKPYLTSHRRIHTGEKPYPCTECGRRFRHKPNLLSHSKIHKRLEVSAQAAPHPESHQIAAEPMAQPALGVPLGSPRTPAEAPALLHSCSDCGRSFRLERFLRLHQRQHTGERPFACTECGKNFGKKTHLVAHSRVHSGERPFACEECGRRFSQGSHLAAHRRDHAPERPFVCPDCGKAFRHKPYLAAHRRIHTGEKPYVCPDCGKAFSQKSNLVSHRRIHTGERPYACPDCDRSFSQKSNLITHRKSHIRDGAFCCAICGQTFDDEDRLLMHQKKHDA.

Positions 1–50 (MLEQRCRGPTAMGPAQPWLFSGPSQESSQPDRGLRYQGKSAQPRGQTPGK) are disordered. A Phosphoserine modification is found at Ser27. Position 39 is an N6-acetyllysine (Lys39). The segment at 52 to 74 (HRCAHCRKRFPGWVALWLHARRC) adopts a C2H2-type 1; atypical zinc-finger fold. 2 C2H2-type zinc fingers span residues 80–102 (LPCH…LQVH) and 111–133 (FICH…LRAH). The C2H2-type 4; atypical zinc-finger motif lies at 140-162 (ITCPECDRRFWRQKQLRAHLRRC). 11 consecutive C2H2-type zinc fingers follow at residues 172–194 (FICG…KRVH), 229–251 (FQCA…RRVH), 257–279 (HQCP…RRIH), 285–307 (YPCT…SKIH), 353–375 (HSCS…QRQH), 381–403 (FACT…SRVH), 409–431 (FACE…RRDH), 437–459 (FVCP…RRIH), 465–487 (YVCP…RRIH), 493–515 (YACP…RKSH), and 521–543 (FCCA…QKKH). The residue at position 269 (Lys269) is an N6-acetyllysine.

As to quaternary structure, homodimers and homomultimers. Found in a complex with RIP60 and RIP100.

It localises to the nucleus. It is found in the cytoplasm. The protein resides in the cytosol. Its function is as follows. Sequence-specific double-stranded DNA-binding protein. Binds ATT-rich and T-rich DNA sequences and facilitates DNA bending. May regulate the expression of genes involved in cellular fatty acid import, including SCARB1/CD36, and genes involved in lipid droplet formation. May regulate the expression of LCN2, and thereby influence iron metabolism and apoptosis-related pathways. May regulate the expression of genes involved in glucose transport. The polypeptide is DNA-binding protein REPIN1 (Repin1) (Mus musculus (Mouse)).